Consider the following 199-residue polypeptide: MEWKYVIPGIPDNFFERDEEIPMTKEEIRALALSKLRIRKGDMILDIGCGTGSVTVEASLLVGSTGKVYGVDKEEKAINLTRRNAEKFGVLNNIVLIKGEAPEILFTINEKFDRIFIGGGSEKIKEIISASWEIIKKGGRVVIDAILLETVNNAISAMENIGFINLEITEVIIAKGMKTKVGTAMMTRNPIFIISGEKQ.

S-adenosyl-L-methionine contacts are provided by residues Thr-24, 48-52 (GCGTG), Asp-72, and Ala-101.

This sequence belongs to the methyltransferase superfamily. Archaeal-type CbiT family.

It catalyses the reaction Co-precorrin-6B + S-adenosyl-L-methionine = Co-precorrin-7 + S-adenosyl-L-homocysteine + CO2. It participates in cofactor biosynthesis; adenosylcobalamin biosynthesis; cob(II)yrinate a,c-diamide from sirohydrochlorin (anaerobic route): step 8/10. Functionally, catalyzes the methylation of C-15 in cobalt-precorrin-6B followed by the decarboxylation of C-12 to form cobalt-precorrin-7. This is Probable cobalt-precorrin-6B C(15)-methyltransferase (decarboxylating) from Saccharolobus islandicus (strain Y.N.15.51 / Yellowstone #2) (Sulfolobus islandicus).